Here is a 577-residue protein sequence, read N- to C-terminus: Phosphoethanolamine transferase EptC (577 aa).

5 helical membrane-spanning segments follow: residues 17 to 37 (LGWA…IIYI), 44 to 64 (NGIR…FLFP), 69 to 89 (IIAA…LCYY), 119 to 139 (YFSL…VLLW), and 154 to 174 (VVSF…NTFI).

It belongs to the phosphoethanolamine transferase family. EptC/CptA subfamily. As to quaternary structure, forms a complex with an unidentified protein of approximately 36 kDa.

The protein localises to the cell inner membrane. It functions in the pathway bacterial outer membrane biogenesis; LPS core biosynthesis. Catalyzes the addition of a phosphoethanolamine moiety to the outer membrane lipopolysaccharide core. This chain is Phosphoethanolamine transferase EptC (eptC), found in Escherichia coli (strain K12).